The sequence spans 274 residues: Diaminopimelate epimerase (274 aa).

Residues N11, Q44, and N64 each contribute to the substrate site. C73 serves as the catalytic Proton donor. Substrate contacts are provided by residues 74-75 (GN), N157, N190, and 208-209 (ER). C217 functions as the Proton acceptor in the catalytic mechanism. 218–219 (GS) is a substrate binding site.

The protein belongs to the diaminopimelate epimerase family. As to quaternary structure, homodimer.

It localises to the cytoplasm. It carries out the reaction (2S,6S)-2,6-diaminopimelate = meso-2,6-diaminopimelate. The protein operates within amino-acid biosynthesis; L-lysine biosynthesis via DAP pathway; DL-2,6-diaminopimelate from LL-2,6-diaminopimelate: step 1/1. Catalyzes the stereoinversion of LL-2,6-diaminopimelate (L,L-DAP) to meso-diaminopimelate (meso-DAP), a precursor of L-lysine and an essential component of the bacterial peptidoglycan. This Serratia proteamaculans (strain 568) protein is Diaminopimelate epimerase.